A 302-amino-acid chain; its full sequence is NAD kinase 2 (302 aa).

The active-site Proton acceptor is Asp-79. NAD(+) is bound by residues 79-80 (DG), 153-154 (NE), Asp-183, 194-199 (TAYSLS), Ala-218, and Asn-252.

Belongs to the NAD kinase family. Requires a divalent metal cation as cofactor.

It is found in the cytoplasm. The catalysed reaction is NAD(+) + ATP = ADP + NADP(+) + H(+). Its function is as follows. Involved in the regulation of the intracellular balance of NAD and NADP, and is a key enzyme in the biosynthesis of NADP. Catalyzes specifically the phosphorylation on 2'-hydroxyl of the adenosine moiety of NAD to yield NADP. The protein is NAD kinase 2 of Prochlorococcus marinus subsp. pastoris (strain CCMP1986 / NIES-2087 / MED4).